Here is a 435-residue protein sequence, read N- to C-terminus: 5-hydroxybenzimidazole synthase (435 aa).

Residues methionine 95, tyrosine 124, histidine 163, 186–188 (SKG), 227–230 (NGLR), and glutamate 266 contribute to the substrate site. Histidine 270 contacts Zn(2+). Substrate is bound at residue tyrosine 293. Histidine 334 provides a ligand contact to Zn(2+). 3 residues coordinate [4Fe-4S] cluster: cysteine 410, cysteine 413, and cysteine 417.

The protein belongs to the ThiC family. 5-hydroxybenzimidazole synthase subfamily. Homodimer. Requires [4Fe-4S] cluster as cofactor.

The catalysed reaction is 5-amino-1-(5-phospho-beta-D-ribosyl)imidazole + AH2 + S-adenosyl-L-methionine = 5-hydroxybenzimidazole + 5'-deoxyadenosine + formate + L-methionine + A + NH4(+) + phosphate + 2 H(+). In terms of biological role, catalyzes the conversion of aminoimidazole ribotide (AIR) to 5-hydroxybenzimidazole (5-HBI) in a radical S-adenosyl-L-methionine (SAM)-dependent reaction. Is thus involved in the anaerobic biosynthesis of the benzimidazole lower axial ligand of the cobamide produced by G.sulfurreducens. The sequence is that of 5-hydroxybenzimidazole synthase from Geobacter sulfurreducens (strain ATCC 51573 / DSM 12127 / PCA).